A 248-amino-acid chain; its full sequence is Small ribosomal subunit protein uS3 (248 aa).

In terms of domain architecture, KH type-2 spans 38–106 (IREFLSEGLE…QVQLNILEVK (69 aa)). Over residues 214-229 (SLMNARDERPSRGGRR) the composition is skewed to basic and acidic residues. A disordered region spans residues 214–248 (SLMNARDERPSRGGRRERPRRGGARRQRAEKKQEG). Residues 230–242 (ERPRRGGARRQRA) show a composition bias toward basic residues.

Belongs to the universal ribosomal protein uS3 family. Part of the 30S ribosomal subunit. Forms a tight complex with proteins S10 and S14.

Its function is as follows. Binds the lower part of the 30S subunit head. Binds mRNA in the 70S ribosome, positioning it for translation. The polypeptide is Small ribosomal subunit protein uS3 (Corynebacterium urealyticum (strain ATCC 43042 / DSM 7109)).